The following is a 738-amino-acid chain: uncharacterized protein (738 aa).

Polar residues-rich tracts occupy residues 1 to 34, 140 to 169, and 177 to 197; these read MSSS…QVSS, TSSD…QSPP, and KPFS…STKD. 2 disordered regions span residues 1–51 and 140–197; these read MSSS…AASI and TSSD…STKD. An RRM domain is found at 363 to 434; the sequence is SRLFLGHLNT…QKLHLEISKI (72 aa). The tract at residues 466-487 is disordered; it reads YPTSSRKRTRSPLMSKGKSYDR.

This is an uncharacterized protein from Schizosaccharomyces pombe (strain 972 / ATCC 24843) (Fission yeast).